The chain runs to 357 residues: NADH-quinone oxidoreductase subunit H (357 aa).

Transmembrane regions (helical) follow at residues 20–40, 92–112, 127–147, 165–185, 203–223, 259–279, 294–314, and 329–349; these read WLLVWTLVKIVAVVLPLMGCV, ALFVIAPIMTIMPALAAWAVI, LLFVMAITSLEVYGVIVAGWA, ISYEIAMGFVLVIVLMVSGSL, GLTFLSWNWLPLLPMFVIYII, FFLAEYANMILISMMATLMFL, IPGWIWLGIKTLFVVTLFIWF, and LGWKVFIPLTLVYLLIVAIWM.

The protein belongs to the complex I subunit 1 family. NDH-1 is composed of 14 different subunits. Subunits NuoA, H, J, K, L, M, N constitute the membrane sector of the complex.

The protein resides in the cell inner membrane. The catalysed reaction is a quinone + NADH + 5 H(+)(in) = a quinol + NAD(+) + 4 H(+)(out). Functionally, NDH-1 shuttles electrons from NADH, via FMN and iron-sulfur (Fe-S) centers, to quinones in the respiratory chain. The immediate electron acceptor for the enzyme in this species is believed to be ubiquinone. Couples the redox reaction to proton translocation (for every two electrons transferred, four hydrogen ions are translocated across the cytoplasmic membrane), and thus conserves the redox energy in a proton gradient. This subunit may bind ubiquinone. This is NADH-quinone oxidoreductase subunit H from Herminiimonas arsenicoxydans.